The chain runs to 450 residues: Divalent metal cation transporter MntH (450 aa).

Transmembrane regions (helical) follow at residues 44 to 64, 77 to 97, 121 to 141, 152 to 172, 181 to 201, 218 to 238, 273 to 293, 310 to 330, 366 to 386, 387 to 407, and 419 to 439; these read LLAF…PGNW, TLLS…SLAA, FLLW…EVIG, IPLI…LLLM, AFVI…IVAA, IFTN…TVMP, IALM…AATF, LLSP…ALLA, GIAI…GTAD, LLVF…IPLV, and FAIS…IVVL.

Belongs to the NRAMP family.

It localises to the cell inner membrane. H(+)-stimulated, divalent metal cation uptake system. The protein is Divalent metal cation transporter MntH of Bradyrhizobium diazoefficiens (strain JCM 10833 / BCRC 13528 / IAM 13628 / NBRC 14792 / USDA 110).